A 715-amino-acid chain; its full sequence is Beta-galactosidase 9 (715 aa).

Residues 1-20 form the signal peptide; that stretch reads MSGGAVAFLLLVAAAAVANA. E178 serves as the catalytic Proton donor. Residue E247 is the Nucleophile of the active site.

The protein belongs to the glycosyl hydrolase 35 family.

It is found in the secreted. It localises to the extracellular space. Its subcellular location is the apoplast. It catalyses the reaction Hydrolysis of terminal non-reducing beta-D-galactose residues in beta-D-galactosides.. This chain is Beta-galactosidase 9, found in Oryza sativa subsp. japonica (Rice).